A 291-amino-acid chain; its full sequence is Light-independent protochlorophyllide reductase iron-sulfur ATP-binding protein (291 aa).

ATP is bound by residues 10–15 (GIGKST) and K39. S14 is a Mg(2+) binding site. C95 and C129 together coordinate [4Fe-4S] cluster. 180 to 181 (NR) lines the ATP pocket.

It belongs to the NifH/BchL/ChlL family. As to quaternary structure, homodimer. Protochlorophyllide reductase is composed of three subunits; ChlL, ChlN and ChlB. [4Fe-4S] cluster is required as a cofactor.

The protein resides in the plastid. Its subcellular location is the chloroplast. The catalysed reaction is chlorophyllide a + oxidized 2[4Fe-4S]-[ferredoxin] + 2 ADP + 2 phosphate = protochlorophyllide a + reduced 2[4Fe-4S]-[ferredoxin] + 2 ATP + 2 H2O. The protein operates within porphyrin-containing compound metabolism; chlorophyll biosynthesis (light-independent). Functionally, component of the dark-operative protochlorophyllide reductase (DPOR) that uses Mg-ATP and reduced ferredoxin to reduce ring D of protochlorophyllide (Pchlide) to form chlorophyllide a (Chlide). This reaction is light-independent. The L component serves as a unique electron donor to the NB-component of the complex, and binds Mg-ATP. The protein is Light-independent protochlorophyllide reductase iron-sulfur ATP-binding protein of Pinus koraiensis (Korean pine).